Here is a 301-residue protein sequence, read N- to C-terminus: Probable alpha-L-glutamate ligase (301 aa).

Residues 104 to 287 (LQLLSRRGIG…VAGMIIEHLE (184 aa)) enclose the ATP-grasp domain. ATP contacts are provided by residues lysine 141, 178 to 179 (EY), aspartate 187, and 211 to 213 (RSN). Mg(2+)-binding residues include aspartate 248, glutamate 260, and asparagine 262. Aspartate 248, glutamate 260, and asparagine 262 together coordinate Mn(2+).

Belongs to the RimK family. It depends on Mg(2+) as a cofactor. The cofactor is Mn(2+).

The protein is Probable alpha-L-glutamate ligase of Pseudomonas putida (strain GB-1).